A 351-amino-acid chain; its full sequence is GTP 3',8-cyclase (351 aa).

The 226-residue stretch at 29 to 254 folds into the Radical SAM core domain; that stretch reads RFGRVARDLR…EHGREDPSAP (226 aa). R38 contacts GTP. [4Fe-4S] cluster contacts are provided by C45 and C49. Residue Y51 participates in S-adenosyl-L-methionine binding. Residue C52 coordinates [4Fe-4S] cluster. R89 is a binding site for GTP. G93 is an S-adenosyl-L-methionine binding site. Position 120 (T120) interacts with GTP. Residue S144 participates in S-adenosyl-L-methionine binding. A GTP-binding site is contributed by K181. An S-adenosyl-L-methionine-binding site is contributed by M214. Residues C278 and C281 each contribute to the [4Fe-4S] cluster site. 283–285 is a binding site for GTP; the sequence is RTR. C295 serves as a coordination point for [4Fe-4S] cluster.

This sequence belongs to the radical SAM superfamily. MoaA family. As to quaternary structure, monomer and homodimer. [4Fe-4S] cluster is required as a cofactor.

It carries out the reaction GTP + AH2 + S-adenosyl-L-methionine = (8S)-3',8-cyclo-7,8-dihydroguanosine 5'-triphosphate + 5'-deoxyadenosine + L-methionine + A + H(+). Its pathway is cofactor biosynthesis; molybdopterin biosynthesis. Its function is as follows. Catalyzes the cyclization of GTP to (8S)-3',8-cyclo-7,8-dihydroguanosine 5'-triphosphate. This Rhodococcus opacus (strain B4) protein is GTP 3',8-cyclase.